A 547-amino-acid chain; its full sequence is Chaperonin GroEL (547 aa).

ATP contacts are provided by residues Thr30 to Pro33, Lys51, Asp87 to Thr91, Gly415, Asn479 to Ala481, and Asp495.

This sequence belongs to the chaperonin (HSP60) family. In terms of assembly, forms a cylinder of 14 subunits composed of two heptameric rings stacked back-to-back. Interacts with the co-chaperonin GroES.

It is found in the cytoplasm. It carries out the reaction ATP + H2O + a folded polypeptide = ADP + phosphate + an unfolded polypeptide.. Functionally, together with its co-chaperonin GroES, plays an essential role in assisting protein folding. The GroEL-GroES system forms a nano-cage that allows encapsulation of the non-native substrate proteins and provides a physical environment optimized to promote and accelerate protein folding. The sequence is that of Chaperonin GroEL from Cupriavidus necator (strain ATCC 17699 / DSM 428 / KCTC 22496 / NCIMB 10442 / H16 / Stanier 337) (Ralstonia eutropha).